Here is a 97-residue protein sequence, read N- to C-terminus: MNIRPLHDRVIVKRKEVESKSAGGIVLTGTAAGKSTRGEVLAVGNGRILESGDVKALCVKVGDIVIFNDGYGVKSEKIDNEEVLIMSESDILAIVEA.

This sequence belongs to the GroES chaperonin family. In terms of assembly, heptamer of 7 subunits arranged in a ring. Interacts with the chaperonin GroEL.

It localises to the cytoplasm. In terms of biological role, together with the chaperonin GroEL, plays an essential role in assisting protein folding. The GroEL-GroES system forms a nano-cage that allows encapsulation of the non-native substrate proteins and provides a physical environment optimized to promote and accelerate protein folding. GroES binds to the apical surface of the GroEL ring, thereby capping the opening of the GroEL channel. The polypeptide is Co-chaperonin GroES (Photorhabdus laumondii subsp. laumondii (strain DSM 15139 / CIP 105565 / TT01) (Photorhabdus luminescens subsp. laumondii)).